A 556-amino-acid chain; its full sequence is Serine/threonine-protein kinase PksC (556 aa).

Residues 20–287 (YQLRDLLGEG…SAEAMRDECL (268 aa)) form the Protein kinase domain. ATP contacts are provided by residues 26 to 34 (LGEGGMASV) and K49. D151 (proton acceptor) is an active-site residue. 2 disordered regions span residues 300-403 (IVPG…PGGK) and 435-485 (EDPE…DPDK). A compositionally biased stretch (pro residues) spans 336-348 (QPTPSPGPNPYGT). 2 stretches are compositionally biased toward low complexity: residues 360-381 (YPQQ…QAAA) and 445-458 (STAS…KAAG). Residues 461-475 (GPDKEKTIEKDKCTE) are compositionally biased toward basic and acidic residues. A PASTA domain is found at 482–550 (DPDKIQVPDF…MPEIQLKVST (69 aa)).

It belongs to the protein kinase superfamily. Ser/Thr protein kinase family.

It catalyses the reaction L-seryl-[protein] + ATP = O-phospho-L-seryl-[protein] + ADP + H(+). It carries out the reaction L-threonyl-[protein] + ATP = O-phospho-L-threonyl-[protein] + ADP + H(+). This is Serine/threonine-protein kinase PksC (pksC) from Streptomyces coelicolor (strain ATCC BAA-471 / A3(2) / M145).